The following is a 145-amino-acid chain: uncharacterized protein (145 aa).

The N-terminal stretch at 1 to 20 is a signal peptide; the sequence is MKTCTVICCTALVLGLTAYA.

This is an uncharacterized protein from Aedes vexans (Inland floodwater mosquito).